Reading from the N-terminus, the 54-residue chain is Anti-adapter protein SpxO (54 aa).

In terms of assembly, interacts with SpxH.

Functionally, inhibitor of Spx proteolytic control. Acts by interacting with SpxH/YjbH, which disrupts interaction between SpxH and Spx, and inhibits SpxH-enhanced proteolysis of Spx by ClpXP. Required for the stabilization of Spx and activation of Spx-regulated genes in response to cell wall stress. This chain is Anti-adapter protein SpxO, found in Bacillus subtilis (strain 168).